The primary structure comprises 203 residues: A-type ATP synthase subunit E (203 aa).

This sequence belongs to the V-ATPase E subunit family. As to quaternary structure, has multiple subunits with at least A(3), B(3), C, D, E, F, H, I and proteolipid K(x).

The protein resides in the cell membrane. Component of the A-type ATP synthase that produces ATP from ADP in the presence of a proton gradient across the membrane. In Methanococcus maripaludis (strain C7 / ATCC BAA-1331), this protein is A-type ATP synthase subunit E.